The primary structure comprises 299 residues: Protein phosphatase 1 regulatory subunit 3D (299 aa).

The interval 1–22 (MSRGPSSAVLPSALGSRKLGPR) is disordered. Residues serine 23, serine 25, and serine 28 each carry the phosphoserine modification. The interval 37-94 (EPRACRPPGSPGRAPPPTPAPSGCDPRLRPIILRRARSLPSSPERRQKAAGAPGAACR) is disordered. The span at 44–56 (PGSPGRAPPPTPA) shows a compositional bias: pro residues. Over residues 57–67 (PSGCDPRLRPI) the composition is skewed to low complexity. Serine 74 is modified (phosphoserine). Over residues 85–94 (AAGAPGAACR) the composition is skewed to low complexity. Residues 101 to 104 (LRVR) carry the PP1-binding motif motif. The residue at position 133 (serine 133) is a Phosphoserine. The region spanning 169–278 (GERLQRQLVC…NNDHRDYSLT (110 aa)) is the CBM21 domain.

In terms of assembly, interacts with PPP1CC catalytic subunit of PP1, and associates with glycogen. Interacts with EPM2A; in the presence of NHLC1/malin the interaction leads to PPP1R3D ubiquitination and autophagic degradation. Expressed in all tissues tested. High expression in skeletal muscle and heart.

In terms of biological role, seems to act as a glycogen-targeting subunit for PP1. PP1 is essential for cell division, and participates in the regulation of glycogen metabolism, muscle contractility and protein synthesis. In Homo sapiens (Human), this protein is Protein phosphatase 1 regulatory subunit 3D (PPP1R3D).